Reading from the N-terminus, the 366-residue chain is Chorismate synthase (366 aa).

Arginine 48 contributes to the NADP(+) binding site. Residues 125 to 127 (RSS), glycine 283, 298 to 302 (KPTPS), and arginine 324 each bind FMN.

Belongs to the chorismate synthase family. Homotetramer. FMNH2 is required as a cofactor.

It catalyses the reaction 5-O-(1-carboxyvinyl)-3-phosphoshikimate = chorismate + phosphate. It functions in the pathway metabolic intermediate biosynthesis; chorismate biosynthesis; chorismate from D-erythrose 4-phosphate and phosphoenolpyruvate: step 7/7. In terms of biological role, catalyzes the anti-1,4-elimination of the C-3 phosphate and the C-6 proR hydrogen from 5-enolpyruvylshikimate-3-phosphate (EPSP) to yield chorismate, which is the branch point compound that serves as the starting substrate for the three terminal pathways of aromatic amino acid biosynthesis. This reaction introduces a second double bond into the aromatic ring system. The chain is Chorismate synthase from Lachnospira eligens (strain ATCC 27750 / DSM 3376 / VPI C15-48 / C15-B4) (Eubacterium eligens).